A 90-amino-acid polypeptide reads, in one-letter code: [Phe8]-phyllolitorin (90 aa).

Positions 1–30 (MSAVPFTRVLLISGFLAHLLLSTFVTLTVC) are cleaved as a signal peptide. A propeptide spanning residues 31–48 (KEVTEESDDLSKRNVLQR) is cleaved from the precursor. Q49 carries the pyrrolidone carboxylic acid modification. A Methionine amide modification is found at M57. Positions 61-90 (SLENTNRRSDEDMEISALFRGSPLKVKRSD) are excised as a propeptide.

The protein belongs to the bombesin/neuromedin-B/ranatensin family. Expressed by the skin glands.

It localises to the secreted. This is [Phe8]-phyllolitorin from Phyllomedusa sauvagei (Sauvage's leaf frog).